The sequence spans 173 residues: dCTP deaminase, dUMP-forming (173 aa).

Residues 93 to 98 (RSSIGR), Asp111, 119 to 121 (TLE), and Gln138 each bind dCTP. Catalysis depends on Glu121, which acts as the Proton donor/acceptor.

This sequence belongs to the dCTP deaminase family. Homotrimer.

The catalysed reaction is dCTP + 2 H2O = dUMP + NH4(+) + diphosphate. The protein operates within pyrimidine metabolism; dUMP biosynthesis; dUMP from dCTP: step 1/1. Functionally, bifunctional enzyme that catalyzes both the deamination of dCTP to dUTP and the hydrolysis of dUTP to dUMP without releasing the toxic dUTP intermediate. This Leptospira interrogans serogroup Icterohaemorrhagiae serovar copenhageni (strain Fiocruz L1-130) protein is dCTP deaminase, dUMP-forming.